The primary structure comprises 548 residues: Chaperonin GroEL (548 aa).

ATP-binding positions include 29–32, lysine 50, 86–90, glycine 414, 478–480, and aspartate 494; these read TMGP, DGTTT, and NAA.

This sequence belongs to the chaperonin (HSP60) family. As to quaternary structure, forms a cylinder of 14 subunits composed of two heptameric rings stacked back-to-back. Interacts with the co-chaperonin GroES.

The protein resides in the cytoplasm. It catalyses the reaction ATP + H2O + a folded polypeptide = ADP + phosphate + an unfolded polypeptide.. In terms of biological role, together with its co-chaperonin GroES, plays an essential role in assisting protein folding. The GroEL-GroES system forms a nano-cage that allows encapsulation of the non-native substrate proteins and provides a physical environment optimized to promote and accelerate protein folding. May play a protective role against the defense mechanisms generated by the infected macrophages. This chain is Chaperonin GroEL, found in Legionella pneumophila.